The chain runs to 512 residues: Cytochrome P450 monooxygenase FrzL (512 aa).

Residues 6-26 form a helical membrane-spanning segment; the sequence is TMLAFVPYLAVFVACYGLVYY. Cys423 provides a ligand contact to heme.

This sequence belongs to the cytochrome P450 family. Requires heme as cofactor.

It is found in the membrane. Cytochrome P450 monooxygenase; part of the gene cluster that mediates the biosynthesis of the alkaloid (-)-FR901483, a potent immunosuppressant that shows efficacy in animal models and a probable inhibitor of purine nucleotide biosynthesis by targeting phosphoribosylpyrophosphate amidotransferase (PPAT). The only unassigned enzyme in the cluster is the second cytochrome P450 monooxygenase FrzL. The biosynthesis of (-)-FR901483 starts with the condensation of two L-tyrosines to yield (S,S)-dityrosyl-piperazine. This process occurs in 3 steps with the non-canonical nonribosomal peptide synthetase FrzA catalyzing the reduction of L-tyrosine into L-tyrosinal, the spontaneous condensation of 2 L-tyrosinal units, and the subsequent reduction by the NmrA-like family domain-containing oxidoreductase FrzB. The cytochrome P450 monooxygenase FrzC then performs coupling between N10 and C1' to morph the piperazine into a 1,4-diazabicyclo[3.2.1]octane spiro-fused to a 2,5-cyclohexadienone. The dienone portion is further reduced to cyclohexanone by the flavin-dependent reductase FrzD. The methyltranserases (MTs) FrzE and FrzF are then involved in the methylation at the C10' amine and the C4 phenolic oxygen, respectively. The order of the two MTs appear to be interchangeable. Cleavage of the C9-N10' bond by the dioxygenase FrzG then leads to formation of a conjugated iminium. In addition to the oxidation of C9, an additional dehydrogenation between C7 and C8 can occur to give a likely shunt product. The next biosynthetic step is the intramolecular aldol condensation catalyzed by the newly identified aldolase FrzH to yield an aza-tricyclic product with the formation of a C9-C3' bond. The short-chain dehydrogenase/reductase FrzI then produces dephospho-(-)-FR901483 that is phosphorylated at C4'-OH into (-)-FR901483 by the phosphotransferase FrzJ. This chain is Cytochrome P450 monooxygenase FrzL, found in Cladobotryum sp.